The chain runs to 485 residues: Adenosylhomocysteinase (485 aa).

Positions 60, 146, and 208 each coordinate substrate. NAD(+) is bound at residue 209 to 211 (TTT). Substrate contacts are provided by lysine 238 and aspartate 242. NAD(+) contacts are provided by residues asparagine 243, 272-277 (GYGDVG), glutamate 295, asparagine 330, 351-353 (IGH), and asparagine 399.

The protein belongs to the adenosylhomocysteinase family. NAD(+) serves as cofactor.

It localises to the cytoplasm. It catalyses the reaction S-adenosyl-L-homocysteine + H2O = L-homocysteine + adenosine. Its pathway is amino-acid biosynthesis; L-homocysteine biosynthesis; L-homocysteine from S-adenosyl-L-homocysteine: step 1/1. In terms of biological role, may play a key role in the regulation of the intracellular concentration of adenosylhomocysteine. This is Adenosylhomocysteinase from Streptomyces coelicolor (strain ATCC BAA-471 / A3(2) / M145).